A 139-amino-acid polypeptide reads, in one-letter code: Desampylase (139 aa).

In terms of domain architecture, MPN spans 6-139 (LSLAADARDS…EFRELSVAVE (134 aa)). The active-site Proton donor/acceptor is glutamate 31. The Zn(2+) site is built by histidine 88, histidine 90, and aspartate 101. A JAMM motif motif is present at residues 88 to 101 (HSHPESDPVPSATD).

It belongs to the peptidase M67B family. Monomer. Zn(2+) is required as a cofactor.

It carries out the reaction an N(6)-[small archaeal modifier protein]-[protein]-L-lysine + H2O = a [protein]-L-lysine + a [small archaeal modifier protein].. With respect to regulation, inhibited by EDTA and N-ethylmaleimide (NEM) in vitro. Functionally, metalloprotease that displays desampylase (DSAMP) activity, cleaving ubiquitin-like small archaeal modifier proteins (SAMP1, SAMP2 and SAMP3) from protein conjugates (isopeptide- and linear-linked). Thus, likely regulates sampylation and the pools of 'free' SAMP available for protein modification. Functions as a specific and not a general protease since it is unable to hydrolyze a variety of unmodified proteins otherwise hydrolyzed by proteinase K. The polypeptide is Desampylase (Haloferax volcanii (strain ATCC 29605 / DSM 3757 / JCM 8879 / NBRC 14742 / NCIMB 2012 / VKM B-1768 / DS2) (Halobacterium volcanii)).